Reading from the N-terminus, the 160-residue chain is Ribosomal RNA large subunit methyltransferase H (160 aa).

Residues leucine 76 and glycine 108 each coordinate S-adenosyl-L-methionine.

The protein belongs to the RNA methyltransferase RlmH family. In terms of assembly, homodimer.

The protein resides in the cytoplasm. It carries out the reaction pseudouridine(1915) in 23S rRNA + S-adenosyl-L-methionine = N(3)-methylpseudouridine(1915) in 23S rRNA + S-adenosyl-L-homocysteine + H(+). In terms of biological role, specifically methylates the pseudouridine at position 1915 (m3Psi1915) in 23S rRNA. The polypeptide is Ribosomal RNA large subunit methyltransferase H (Nitrobacter winogradskyi (strain ATCC 25391 / DSM 10237 / CIP 104748 / NCIMB 11846 / Nb-255)).